A 91-amino-acid chain; its full sequence is Large ribosomal subunit protein bL31B-1 (91 aa).

The protein belongs to the bacterial ribosomal protein bL31 family. Type B subfamily. In terms of assembly, part of the 50S ribosomal subunit.

The chain is Large ribosomal subunit protein bL31B-1 from Streptomyces avermitilis (strain ATCC 31267 / DSM 46492 / JCM 5070 / NBRC 14893 / NCIMB 12804 / NRRL 8165 / MA-4680).